Here is a 220-residue protein sequence, read N- to C-terminus: Adenylate kinase (220 aa).

Position 10-15 (10-15 (GAGKGT)) interacts with ATP. Residues 30-59 (STGDMLRAAVKAGTPLGLKAKEVMDGGNLV) are NMP. AMP is bound by residues threonine 31, arginine 36, 57 to 59 (NLV), 85 to 88 (GFPR), and glutamine 92. An LID region spans residues 122–159 (GRRVHPASGRTYHIRFNPPQTAGMDDETGEPLVQRADD). ATP contacts are provided by residues arginine 123 and 132–133 (TY). AMP-binding residues include arginine 156 and arginine 167. An ATP-binding site is contributed by glycine 205.

Belongs to the adenylate kinase family. In terms of assembly, monomer.

It is found in the cytoplasm. It carries out the reaction AMP + ATP = 2 ADP. It functions in the pathway purine metabolism; AMP biosynthesis via salvage pathway; AMP from ADP: step 1/1. Catalyzes the reversible transfer of the terminal phosphate group between ATP and AMP. Plays an important role in cellular energy homeostasis and in adenine nucleotide metabolism. This chain is Adenylate kinase, found in Chlorobium luteolum (strain DSM 273 / BCRC 81028 / 2530) (Pelodictyon luteolum).